A 102-amino-acid polypeptide reads, in one-letter code: UPF0235 protein Noc_3000 (102 aa).

The protein belongs to the UPF0235 family.

This Nitrosococcus oceani (strain ATCC 19707 / BCRC 17464 / JCM 30415 / NCIMB 11848 / C-107) protein is UPF0235 protein Noc_3000.